The following is a 259-amino-acid chain: GDP-perosamine N-formyltransferase (259 aa).

(6S)-5,6,7,8-tetrahydrofolate-binding positions include 89–91 (SLI) and 139–143 (DENFD).

This sequence belongs to the Fmt family. In terms of assembly, homodimer.

The catalysed reaction is GDP-alpha-D-perosamine + (6R)-10-formyltetrahydrofolate = GDP-N-formyl-alpha-D-perosamine + (6S)-5,6,7,8-tetrahydrofolate + H(+). It participates in bacterial outer membrane biogenesis; lipopolysaccharide biosynthesis. In terms of biological role, involved in the lipopolysaccharide (LPS) O-antigen biosynthesis. Catalyzes the transfer of a formyl group to GDP-perosamine, leading to the formation of GDP-N-formylperosamine. Is critical for full bacterial virulence. The polypeptide is GDP-perosamine N-formyltransferase (Brucella abortus (strain 2308)).